A 437-amino-acid polypeptide reads, in one-letter code: MKLWGGRFRESESELMEEFNASLSFDKKLYEEDIEGSIAHVKMLNKCKIINNEECEEILSGLKSLYKDIRSGKLKIEGDYEDIHSFVEVNLIDRIGAVGKKLHTARSRNDQVAVDMKMYVKKSSYIIIECINKLMETIKDKAENNHFIMPGYTHMQRAQVVTFTHHMMAYYSMFNRDKKRIDNAISNLNESPLGCCALAGTTYDTDREMTSKELGFSKPVDNFLDGVSDRDYIIEVLSAFSICMMHLSRLSEELIIWSTKEFSFIQMDDKFSTGSSIMPQKKNPDAAELIRGKTGRVYGDLIAMLTIMKGIPLAYNKDMQEDKEQFFDSFDTLKMCILVMDGMIATMTVKKEAMKEAVKGGFLNATDVADYLVNKGVAFRDAHKISGELVIYCENNDKAIEELNINEFKNFCNLFDEDVYEFINYNNVIKKGNKKIM.

The protein belongs to the lyase 1 family. Argininosuccinate lyase subfamily.

Its subcellular location is the cytoplasm. The enzyme catalyses 2-(N(omega)-L-arginino)succinate = fumarate + L-arginine. The protein operates within amino-acid biosynthesis; L-arginine biosynthesis; L-arginine from L-ornithine and carbamoyl phosphate: step 3/3. This is Argininosuccinate lyase from Clostridium acetobutylicum (strain ATCC 824 / DSM 792 / JCM 1419 / IAM 19013 / LMG 5710 / NBRC 13948 / NRRL B-527 / VKM B-1787 / 2291 / W).